The following is a 155-amino-acid chain: Small ribosomal subunit protein uS9 (155 aa).

The protein belongs to the universal ribosomal protein uS9 family.

The polypeptide is Small ribosomal subunit protein uS9 (Allorhizobium ampelinum (strain ATCC BAA-846 / DSM 112012 / S4) (Agrobacterium vitis (strain S4))).